A 354-amino-acid polypeptide reads, in one-letter code: Serine/threonine-protein kinase-transforming protein mos (354 aa).

Residues 74–350 (VCLMHRLGSG…LLQRDLKAFR (277 aa)) form the Protein kinase domain. ATP is bound by residues 80-88 (LGSGGFGSV) and Lys-101. The active-site Proton acceptor is the Asp-209.

It belongs to the protein kinase superfamily. Ser/Thr protein kinase family.

The catalysed reaction is L-seryl-[protein] + ATP = O-phospho-L-seryl-[protein] + ADP + H(+). It carries out the reaction L-threonyl-[protein] + ATP = O-phospho-L-threonyl-[protein] + ADP + H(+). In Moloney murine sarcoma virus (strain ts110) (MoMSV), this protein is Serine/threonine-protein kinase-transforming protein mos (V-MOS).